Reading from the N-terminus, the 67-residue chain is Major cold shock protein (67 aa).

The 60-residue stretch at 4–63 (GTVKWFNAEKGFGFISTENGQDVFAHFSAIQTNGFKTLEEGQKVAFDVEEGQRGPQAVNI) folds into the CSD domain.

As to quaternary structure, homodimer.

Its subcellular location is the cytoplasm. The sequence is that of Major cold shock protein (cspA) from Streptococcus pyogenes serotype M3 (strain ATCC BAA-595 / MGAS315).